A 141-amino-acid polypeptide reads, in one-letter code: Large ribosomal subunit protein uL11 (141 aa).

Belongs to the universal ribosomal protein uL11 family. Part of the ribosomal stalk of the 50S ribosomal subunit. Interacts with L10 and the large rRNA to form the base of the stalk. L10 forms an elongated spine to which L12 dimers bind in a sequential fashion forming a multimeric L10(L12)X complex. One or more lysine residues are methylated.

Functionally, forms part of the ribosomal stalk which helps the ribosome interact with GTP-bound translation factors. In Exiguobacterium sibiricum (strain DSM 17290 / CCUG 55495 / CIP 109462 / JCM 13490 / 255-15), this protein is Large ribosomal subunit protein uL11.